The primary structure comprises 415 residues: Levansucrase (415 aa).

Sucrose contacts are provided by Trp-45, Asp-46, Ala-132, Arg-202, and Asp-203. The active-site Nucleophile is Asp-46. Glu-287 functions as the Proton donor/acceptor in the catalytic mechanism.

The protein belongs to the glycosyl hydrolase 68 family.

The protein localises to the secreted. It carries out the reaction [6)-beta-D-fructofuranosyl-(2-&gt;](n) alpha-D-glucopyranoside + sucrose = [6)-beta-D-fructofuranosyl-(2-&gt;](n+1) alpha-D-glucopyranoside + D-glucose. Catalyzes the synthesis of levan, a fructose polymer, by transferring the fructosyl moiety from sucrose to a growing acceptor molecule. The chain is Levansucrase from Erwinia amylovora (Fire blight bacteria).